An 843-amino-acid chain; its full sequence is Protein P (843 aa).

The tract at residues 1-177 (MPLSYQHFRK…FCGSPYSWEQ (177 aa)) is terminal protein domain (TP). Residues 178 to 346 (DLQHGRLVFQ…YCLCHIVNLI (169 aa)) are spacer. 2 disordered regions span residues 220-258 (KSRLGPQPPQGQLAGRPQGGSGSIRARVHPSPWGTVGVE) and 292-319 (SKGHSSSGRAVELHHFPPNSSRSQSQGS). Positions 308–319 (PPNSSRSQSQGS) are enriched in low complexity. The segment at 347–690 (DDWGPCAEHG…YLNLYPVARQ (344 aa)) is polymerase/reverse transcriptase domain (RT). The 244-residue stretch at 357–600 (EHRIRTPRTP…YSLNFMGYVI (244 aa)) folds into the Reverse transcriptase domain. The Mg(2+) site is built by D429, D551, and D552.

It belongs to the hepadnaviridae P protein family.

It catalyses the reaction DNA(n) + a 2'-deoxyribonucleoside 5'-triphosphate = DNA(n+1) + diphosphate. It carries out the reaction Endonucleolytic cleavage to 5'-phosphomonoester.. Activated by host HSP70 and HSP40 in vitro to be able to bind the epsilon loop of the pgRNA. Because deletion of the RNase H region renders the protein partly chaperone-independent, the chaperones may be needed indirectly to relieve occlusion of the RNA-binding site by this domain. Inhibited by several reverse-transcriptase inhibitors: Lamivudine, Adefovir and Entecavir. In terms of biological role, multifunctional enzyme that converts the viral RNA genome into dsDNA in viral cytoplasmic capsids. This enzyme displays a DNA polymerase activity that can copy either DNA or RNA templates, and a ribonuclease H (RNase H) activity that cleaves the RNA strand of RNA-DNA heteroduplexes in a partially processive 3'- to 5'-endonucleasic mode. Neo-synthesized pregenomic RNA (pgRNA) are encapsidated together with the P protein, and reverse-transcribed inside the nucleocapsid. Initiation of reverse-transcription occurs first by binding the epsilon loop on the pgRNA genome, and is initiated by protein priming, thereby the 5'-end of (-)DNA is covalently linked to P protein. Partial (+)DNA is synthesized from the (-)DNA template and generates the relaxed circular DNA (RC-DNA) genome. After budding and infection, the RC-DNA migrates in the nucleus, and is converted into a plasmid-like covalently closed circular DNA (cccDNA). The activity of P protein does not seem to be necessary for cccDNA generation, and is presumably released from (+)DNA by host nuclear DNA repair machinery. This Hepatitis B virus genotype B1 (isolate Japan/Yamagata-2/1998) (HBV-B) protein is Protein P.